The following is a 267-amino-acid chain: uncharacterized protein (267 aa).

The tract at residues M1–T55 is disordered. Positions F9–E24 are enriched in acidic residues. Basic residues predominate over residues M29–K46. 5 consecutive transmembrane segments (helical) span residues Y93–L115, G135–V157, A173–V195, M199–Q221, and Y234–I256.

The protein resides in the cell membrane. This is an uncharacterized protein from Bacillus subtilis (strain 168).